The chain runs to 543 residues: Chaperonin GroEL 1 (543 aa).

ATP-binding positions include 29 to 32 (TLGP), lysine 50, 86 to 90 (DGTTT), glycine 414, and aspartate 493. The segment at 524-543 (KEDKGAPAGMGGMPPGGGMY) is disordered. Residues 531-543 (AGMGGMPPGGGMY) show a composition bias toward gly residues.

It belongs to the chaperonin (HSP60) family. In terms of assembly, forms a cylinder of 14 subunits composed of two heptameric rings stacked back-to-back. Interacts with the co-chaperonin GroES.

It is found in the cytoplasm. It carries out the reaction ATP + H2O + a folded polypeptide = ADP + phosphate + an unfolded polypeptide.. Together with its co-chaperonin GroES, plays an essential role in assisting protein folding. The GroEL-GroES system forms a nano-cage that allows encapsulation of the non-native substrate proteins and provides a physical environment optimized to promote and accelerate protein folding. This chain is Chaperonin GroEL 1, found in Syntrophobacter fumaroxidans (strain DSM 10017 / MPOB).